Consider the following 49-residue polypeptide: Large ribosomal subunit protein eL40 (49 aa).

It belongs to the eukaryotic ribosomal protein eL40 family.

This chain is Large ribosomal subunit protein eL40, found in Natronomonas pharaonis (strain ATCC 35678 / DSM 2160 / CIP 103997 / JCM 8858 / NBRC 14720 / NCIMB 2260 / Gabara) (Halobacterium pharaonis).